A 371-amino-acid chain; its full sequence is tRNA (guanine(26)-N(2))-dimethyltransferase (371 aa).

Residues 4 to 368 form the Trm1 methyltransferase domain; that stretch reads IEVTEGRTTF…APLDAIAAAL (365 aa). S-adenosyl-L-methionine is bound by residues Arg41, Arg66, Asp82, Asp108, and Ala109. Residues Cys237, Cys240, Cys256, and Cys259 each contribute to the Zn(2+) site.

The protein belongs to the class I-like SAM-binding methyltransferase superfamily. Trm1 family.

It carries out the reaction guanosine(26) in tRNA + 2 S-adenosyl-L-methionine = N(2)-dimethylguanosine(26) in tRNA + 2 S-adenosyl-L-homocysteine + 2 H(+). Functionally, dimethylates a single guanine residue at position 26 of a number of tRNAs using S-adenosyl-L-methionine as donor of the methyl groups. In Methanosphaerula palustris (strain ATCC BAA-1556 / DSM 19958 / E1-9c), this protein is tRNA (guanine(26)-N(2))-dimethyltransferase.